Here is a 138-residue protein sequence, read N- to C-terminus: uncharacterized protein (138 aa).

Residues 1–35 (MVAPAARVFLRAVRAALTSTVPDLLCLLARGSPRG) form the signal peptide.

As to expression, isoform 1 is highly expressed in small intestine, testis and kidney, medium expressed in brain and heart and low expressed in colon; it could not be detected in liver, adrenal gland and pancreas.

It is found in the secreted. This is an uncharacterized protein from Homo sapiens (Human).